A 918-amino-acid chain; its full sequence is Exostosin-like 3 (918 aa).

The Cytoplasmic segment spans residues 1-30; sequence MTGYTMLRNGGVGNGGQTCMLRWSNRIRLT. A required for interaction with REG3A region spans residues 1–140; that stretch reads MTGYTMLRNG…LKNVISQTEH (140 aa). A helical; Signal-anchor for type II membrane protein membrane pass occupies residues 31 to 51; the sequence is WLSFTLFIILVFFPLIAHYYL. Residues 52–918 lie on the Lumenal side of the membrane; it reads TTLDEADEAG…HDKTKCFKFI (867 aa). Disulfide bonds link C177-C182 and C188-C236. N290 carries an N-linked (GlcNAc...) asparagine glycan. Phosphoserine is present on S361. An intrachain disulfide couples C399 to C414. The N-linked (GlcNAc...) asparagine glycan is linked to N591. UDP-N-acetyl-alpha-D-glucosamine is bound by residues L667, R671, N696, N722, R727, D743, D744, and D745. Residue D745 participates in Mn(2+) binding. N789 carries an N-linked (GlcNAc...) asparagine glycan. A disulfide bond links C830 and C878. Residues E831, D832, and R875 each coordinate UDP-N-acetyl-alpha-D-glucosamine. The active site involves D832.

Belongs to the glycosyltransferase 47 family. As to quaternary structure, homodimer; disulfide-linked. Interacts with REG3A. Requires Mn(2+) as cofactor. As to expression, expressed in pancreatic islet beta-cells. Expressed in lung epithelial cells. Expressed in microglia.

The protein resides in the endoplasmic reticulum membrane. It is found in the golgi apparatus. Its subcellular location is the cell membrane. The protein localises to the nucleus. It catalyses the reaction 3-O-(beta-D-GlcA-(1-&gt;3)-beta-D-Gal-(1-&gt;3)-beta-D-Gal-(1-&gt;4)-beta-D-Xyl)-L-seryl-[protein] + UDP-N-acetyl-alpha-D-glucosamine = 3-O-(alpha-D-GlcNAc-(1-&gt;4)-beta-D-GlcA-(1-&gt;3)-beta-D-Gal-(1-&gt;3)-beta-D-Gal-(1-&gt;4)-beta-D-Xyl)-L-seryl-[protein] + UDP + H(+). It functions in the pathway glycan metabolism; heparan sulfate biosynthesis. Glycosyltransferase which regulates the biosynthesis of heparan sulfate (HS). Initiates HS synthesis by transferring the first N-acetyl-alpha-D-glucosamine (alpha-GlcNAc) residue (GlcNAcT-I activity) to the tetrasaccharide linker (GlcA-Gal-Gal-Xyl-)Ser core linker. May also transfer alpha-GlcNAc residues during HS elongation (GlcNAcT-II activity). Lacks glucuronyl transferase II (GlcAT-II) activity. Important for both skeletal development and hematopoiesis, through the formation of HS proteoglycans (HSPGs). Through the synthesis of HS, regulates postnatal pancreatic islet maturation and insulin secretion. Functionally, receptor for REG3A, REG3B and REG3G, induces the activation of downstream signaling pathways such as PI3K-AKT or RAS-RAF-MEK-ERK signaling pathway. Required for the function of REG3A in regulating keratinocyte proliferation and differentiation. Required for the inhibition of skin inflammation mediated by REG3A through the activation of PI3K-AKT-STAT3 pathway. Required for the function of REG3A and REG3G in glucose tolerance in pancreas. Expressed in microglia, is activated by nociceptor-derived REG3G in response to endotoxins, leading to the inhibition of kynurenine pathway to prevent endotoxic death. The chain is Exostosin-like 3 from Mus musculus (Mouse).